The following is a 210-amino-acid chain: Outer-membrane lipoprotein LolB (210 aa).

An N-terminal signal peptide occupies residues 1–26; the sequence is MSKLKIDTKRRFSLLIALVLIISLSS. Cys27 carries the N-palmitoyl cysteine lipid modification. Cys27 is lipidated: S-diacylglycerol cysteine.

Belongs to the LolB family. Monomer.

Its subcellular location is the cell outer membrane. Plays a critical role in the incorporation of lipoproteins in the outer membrane after they are released by the LolA protein. This chain is Outer-membrane lipoprotein LolB, found in Francisella tularensis subsp. holarctica (strain FTNF002-00 / FTA).